The sequence spans 1099 residues: Adenylate cyclase type 7 (1099 aa).

Residues 1–33 (MPAKGRYFLNEGDEGPDQAALYEKYRLTSLHGP) are Cytoplasmic-facing. 6 consecutive transmembrane segments (helical) span residues 34-54 (LLLLLLLVAAATCIALISIAF), 63-83 (QVVLGTAFLMLTLFVALYVLV), 95-117 (ALALLTWACLMVLGSVLMWDSLE), 122-142 (AWEQVPFFLFVVFVVYALLPL), 147-167 (AIVAGVTSTVSHLLVFGAVTR), and 178-198 (LGLQLLANAVILLGGNFTGAF). The Cytoplasmic portion of the chain corresponds to 199–595 (HKHQLQDASR…YRLVPIPRAR (397 aa)). 3 residues coordinate Mg(2+): Asp286, Ile287, and Asp330. Residues 286–291 (DIVGFT), 328–330 (LGD), and Arg374 contribute to the ATP site. The disordered stretch occupies residues 456–476 (DPRSQQPPPPSHHLSKPKGDA). The segment at 479–484 (KMRASV) is mediates regulation of adenylate cyclase activity by C5 alpha-induced G- beta and gamma pathway. The segment at 493-501 (WGAARPFAH) is mediates regulation of adenylate cyclase activity by sphingosine 1-phosphate-induced G alpha 13 pathway. The disordered stretch occupies residues 504–543 (HRESVSSSETPISNGRRQKAIPLRRHRAPDRSASPKGRLE). Over residues 508 to 518 (VSSSETPISNG) the composition is skewed to polar residues. The interval 508 to 585 (VSSSETPISN…IFLEKGFERE (78 aa)) is modulates adenylate cyclase activity by modulating the binding of G(s)alpha to the high-affinity G(s)alpha binding site in 7C1a/7C2. The segment covering 519 to 531 (RRQKAIPLRRHRA) has biased composition (basic residues). 3 helical membrane passes run 596 to 616 (YDFACASLVFVCILLVHLLVM), 621 to 641 (TLGVSFGLVACLLGLVLSFCF), and 670 to 689 (LVLVVLTVGSLLTVAIINMP). Asn702 is a glycosylation site (N-linked (GlcNAc...) asparagine). 3 helical membrane-spanning segments follow: residues 719–738 (LLPYYTCSCILGFIACSVFL), 747–766 (MLLTVALVAYLLLFNLSPCW), and 813–833 (DLKIMVNFYLILFYATLILLS). Residues 834–1099 (RQIDYYCRLD…TAKFQGLGLN (266 aa)) lie on the Cytoplasmic side of the membrane. ATP contacts are provided by residues Lys950, 1029-1031 (DIW), 1036-1040 (NVASR), and Lys1076.

The protein belongs to the adenylyl cyclase class-4/guanylyl cyclase family. It depends on Mg(2+) as a cofactor. The cofactor is Mn(2+). Phosphorylated by PRKCD. In terms of tissue distribution, most abundant in heart, spleen and lung.

It is found in the membrane. It carries out the reaction ATP = 3',5'-cyclic AMP + diphosphate. Activated by the G protein alpha subunit. Activated by the G protein beta and gamma subunit complex. Activated by GNA13 and GNA12. Ethanol and phorbol 12,13-dibutanoate significantly potentiate adenylate cyclase activity generated in response to the activation of the prostanoid receptor by the agonist prostaglandin E1(1-) in a PKC-dependent manner. Inhibited by lithium. Functionally, catalyzes the formation of cAMP in response to activation of G protein-coupled receptors. Functions in signaling cascades activated namely by thrombin and sphingosine 1-phosphate and mediates regulation of cAMP synthesis through synergistic action of the stimulatory G alpha protein with GNA13. Also, during inflammation, mediates zymosan-induced increase intracellular cAMP, leading to protein kinase A pathway activation in order to modulate innate immune responses through heterotrimeric G proteins G(12/13). Functions in signaling cascades activated namely by dopamine and C5 alpha chain and mediates regulation of cAMP synthesis through synergistic action of the stimulatory G protein with G beta:gamma complex. Functions, through cAMP response regulation, to keep inflammation under control during bacterial infection by sensing the presence of serum factors, such as the bioactive lysophospholipid (LPA) that regulate LPS-induced TNF-alpha production. However, it is also required for the optimal functions of B and T cells during adaptive immune responses by regulating cAMP synthesis in both B and T cells. This chain is Adenylate cyclase type 7, found in Mus musculus (Mouse).